The primary structure comprises 223 residues: Deoxyribose-phosphate aldolase (223 aa).

Catalysis depends on Asp-92, which acts as the Proton donor/acceptor. The active-site Schiff-base intermediate with acetaldehyde is Lys-154. Lys-182 (proton donor/acceptor) is an active-site residue.

Belongs to the DeoC/FbaB aldolase family. DeoC type 1 subfamily.

The protein resides in the cytoplasm. It catalyses the reaction 2-deoxy-D-ribose 5-phosphate = D-glyceraldehyde 3-phosphate + acetaldehyde. Its pathway is carbohydrate degradation; 2-deoxy-D-ribose 1-phosphate degradation; D-glyceraldehyde 3-phosphate and acetaldehyde from 2-deoxy-alpha-D-ribose 1-phosphate: step 2/2. Its function is as follows. Catalyzes a reversible aldol reaction between acetaldehyde and D-glyceraldehyde 3-phosphate to generate 2-deoxy-D-ribose 5-phosphate. The polypeptide is Deoxyribose-phosphate aldolase (Haemophilus influenzae (strain PittEE)).